Here is a 100-residue protein sequence, read N- to C-terminus: Defensin-6 (100 aa).

The signal sequence occupies residues 1 to 19; that stretch reads MRTLTILTAVLLVALQAKA. Positions 20-68 are excised as a propeptide; that stretch reads EPLQAEDDPLQAKAYEADAQEQRGANDQDFAVSFAEDASSSLRALGSTR. 3 cysteine pairs are disulfide-bonded: Cys72–Cys99, Cys74–Cys88, and Cys78–Cys98.

Belongs to the alpha-defensin family. As to quaternary structure, homodimer. Self-assembles into higher-order oligomers termed nanonets, fibril-like structures that entrap microbes. Self-assembly into nanonets seems to protect against proteolytic digestion in duodenal fluid. Interacts with Y.enterocolitica invasin and S.typhimurium fliC/flagellin; the interaction creates an anchoring site for progressive DEFA6 self-assembly into nanonets. In terms of processing, proteolytically cleaved by trypsin at Arg-68; the propeptide is stored in the tissue of the small intestine and the mature peptide is found in the luminal fluid; cleavage may occur during or after release into the lumen. The N-terminal propeptide region suppresses self-assembly and renders DEFA6 propeptide unable to agglutinate bacteria and protect human epithelial cells from bacterial invasion. Under reducing conditions, naturally present in the gut owing to the low redox potential or enzymatically generated by the thioredoxin system, the disulfide bridges are opened leading to a conformational change of DEF6, thereby changing its antimicrobial spectrum. The reduced form exhibits inhibitory activity against anaerobic bacteria, in contrast to the minimal antimicrobial activity of the disulfide-linked oxidized form. The formation of higher-order nanonets and bacterial entrapment is independent of the redox state. In terms of tissue distribution, expressed in Paneth cells of the small intestine (at protein level).

The protein localises to the secreted. It is found in the cytoplasmic vesicle. Its subcellular location is the secretory vesicle. Its function is as follows. Host-defense peptide that contributes to intestinal innate immunity and mediates homeostasis at mucosal surfaces by forming higher-order oligomers that capture bacteria and prevent microbial invasion of the epithelium. After binding to bacterial surface proteins, undergoes ordered self-assembly to form fibril-like nanonets that surround and entangle bacteria and thereby prevent bacterial invasion across the epithelial barrier. Entangles and agglutinates Gram-negative bacteria, such as E.coli, S.typhimurium and Y.enterocolitica, and Gram-positive bacteria such as L.monocytogenes, thereby protecting the intestine against invasion by enteric bacterial pathogens. Blocks adhesion of C.albicans to intestinal epithelial cells and thereby suppresses fungal invasion of epithelial cells and biofilm formation. Under reducing conditions and in an acidic environment similar to the intestinal milieu, exhibits inhibitory activity against anaerobic bacteria such as B.adolescentis, L.acidophilus and B.breve, as well as B.longum and S.thermophilus, possibly by leading to alterations in bacterial cell envelope structures. The disulfide-linked oxidized form exhibits negligible antimicrobial activity against Gram-negative and Gram-positive bacteria, as compared to the enteric defensin DEFA5. This Homo sapiens (Human) protein is Defensin-6 (DEFA6).